The primary structure comprises 352 residues: Protein RecA (352 aa).

Residue Gly-66–Thr-73 coordinates ATP.

This sequence belongs to the RecA family.

It is found in the cytoplasm. Its function is as follows. Can catalyze the hydrolysis of ATP in the presence of single-stranded DNA, the ATP-dependent uptake of single-stranded DNA by duplex DNA, and the ATP-dependent hybridization of homologous single-stranded DNAs. It interacts with LexA causing its activation and leading to its autocatalytic cleavage. This chain is Protein RecA, found in Psychrobacter arcticus (strain DSM 17307 / VKM B-2377 / 273-4).